The primary structure comprises 300 residues: uncharacterized protein (300 aa).

Over 1 to 7 (MGSTRKG) the chain is Periplasmic. A helical transmembrane segment spans residues 8-28 (MLNVLIAAVLWGSSGVCAQYI). One can recognise an EamA 1 domain in the interval 16-145 (VLWGSSGVCA…SLIGTFLLVT (130 aa)). The Cytoplasmic portion of the chain corresponds to 29–45 (MEQSRMSSQFLTMIRLL). Residues 46–66 (FAGLILVTFSFMHGDKIFSIL) traverse the membrane as a helical segment. The Periplasmic segment spans residues 67-71 (KNRKD). The chain crosses the membrane as a helical span at residues 72-92 (ALSLLIFSVVGALTVQLTFLL). Over 93 to 99 (TIEKSNA) the chain is Cytoplasmic. The helical transmembrane segment at 100-120 (ATATVLQFLSPTIIVAWFALA) threads the bilayer. Residues 121-124 (RRTR) lie on the Periplasmic side of the membrane. A helical membrane pass occupies residues 125-145 (PGILVLTAILTSLIGTFLLVT). Residues 146–151 (HGNPTS) lie on the Cytoplasmic side of the membrane. The helical transmembrane segment at 152 to 172 (LSISSAALFWGIASAFAAAFY) threads the bilayer. The 125-residue stretch at 167–291 (FAAAFYTTWP…ILSSVILISL (125 aa)) folds into the EamA 2 domain. Topologically, residues 173-184 (TTWPSRLIAQYG) are periplasmic. A helical membrane pass occupies residues 185–205 (TLPVVGWSMSFGGLILLPFYA). Topologically, residues 206–216 (KEGTHFAVSGS) are cytoplasmic. A helical membrane pass occupies residues 217 to 237 (LILAFFYLVVIGTSLTFSLYL). The Periplasmic segment spans residues 238–263 (KGAQLIGGPKASILSCAEPLSSALLS). A helical transmembrane segment spans residues 264 to 284 (LLLLGISFTLPDWLGTLLILS). At 285 to 300 (SVILISLDSRRRARAA) the chain is on the cytoplasmic side.

Belongs to the EamA transporter family.

The protein resides in the cell inner membrane. This is an uncharacterized protein from Salmonella typhimurium (strain LT2 / SGSC1412 / ATCC 700720).